We begin with the raw amino-acid sequence, 176 residues long: Cell division control protein 31 (176 aa).

The span at 1-12 (MFANARAKRRSR) shows a compositional bias: basic residues. Residues 1–21 (MFANARAKRRSRASSPTPARL) form a disordered region. EF-hand domains follow at residues 34 to 69 (EQRQDINEAFKLFDSDKDNAIDYHELRAAMRALGFN), 70 to 105 (AEKSEVLKILRDFDKTGKGYLQMEDFVRVMTEKIVE), 107 to 142 (DPLEEIKRAFELFDDDETGKISLRNLRRVAKELNEN), and 143 to 176 (IDDQELEAMIEEFDLDQDGEINEQEFIAIMMDEA). 4 residues coordinate Ca(2+): Asp47, Asp49, Asp51, and Glu58. Ca(2+) contacts are provided by Asp156, Asp158, Asp160, Glu162, and Glu167.

It belongs to the centrin family. Component of the spindle pole body (SPB), acting as the connector of microtubule arrays in the cytoplasm and the nucleoplasm, is involved in nuclear positioning before chromosome segregation, SPB separation, spindle formation, chromosome segregation, nuclear migration into the bud, nuclear reorientation after cytokinesis and nuclear fusion during conjugation. The SPB half-bridge, which is tightly associated with the cytoplasmic side of the nuclear envelope and the SPB, is playing a key role as the starting structure for and in the initiation of SPB duplication in G1. Within the complex, interacts with sad1.

The protein localises to the nucleus. Functionally, required for the proper coordination between exit from mitosis and the initiation of septation. Has a role in bipolar spindle formation during spindle pole body (SPB) duplication. Required for the localization of sad1 to the SPB. In Schizosaccharomyces pombe (strain 972 / ATCC 24843) (Fission yeast), this protein is Cell division control protein 31 (cdc31).